The chain runs to 630 residues: 1-deoxy-D-xylulose-5-phosphate synthase (630 aa).

Residues histidine 75 and 116–118 (GHS) each bind thiamine diphosphate. Aspartate 147 is a binding site for Mg(2+). Residues 148 to 149 (GA), asparagine 176, tyrosine 287, and glutamate 367 contribute to the thiamine diphosphate site. Residue asparagine 176 participates in Mg(2+) binding.

This sequence belongs to the transketolase family. DXPS subfamily. Homodimer. Requires Mg(2+) as cofactor. The cofactor is thiamine diphosphate.

The enzyme catalyses D-glyceraldehyde 3-phosphate + pyruvate + H(+) = 1-deoxy-D-xylulose 5-phosphate + CO2. Its pathway is metabolic intermediate biosynthesis; 1-deoxy-D-xylulose 5-phosphate biosynthesis; 1-deoxy-D-xylulose 5-phosphate from D-glyceraldehyde 3-phosphate and pyruvate: step 1/1. Catalyzes the acyloin condensation reaction between C atoms 2 and 3 of pyruvate and glyceraldehyde 3-phosphate to yield 1-deoxy-D-xylulose-5-phosphate (DXP). The polypeptide is 1-deoxy-D-xylulose-5-phosphate synthase (Treponema pallidum (strain Nichols)).